Here is a 193-residue protein sequence, read N- to C-terminus: CD70 antigen (193 aa).

At 1–17 (MPEEGSGCSVRRRPYGC) the chain is on the cytoplasmic side. Residues 18–38 (VLRAALVPLVAGLVICLVVCI) form a helical; Signal-anchor for type II membrane protein membrane-spanning segment. The Extracellular segment spans residues 39–193 (QRFAQAQQQL…TFFGVQWVRP (155 aa)). Residues 56–191 (DVAELQLNHT…DETFFGVQWV (136 aa)) form the THD domain. Asparagine 63 carries an N-linked (GlcNAc...) asparagine glycan. Cystine bridges form between cysteine 115–cysteine 151 and cysteine 133–cysteine 168. N-linked (GlcNAc...) asparagine glycosylation occurs at asparagine 170.

It belongs to the tumor necrosis factor family. Homotrimer. Post-translationally, N-glycosylated.

The protein localises to the cell membrane. Its function is as follows. Expressed at the plasma membrane of B cells, it is the ligand of the CD27 receptor which is specifically expressed at the surface of T cells. The CD70-CD27 signaling pathway mediates antigen-specific T cell activation and expansion which in turn provides immune surveillance of B cells. In Homo sapiens (Human), this protein is CD70 antigen.